A 575-amino-acid polypeptide reads, in one-letter code: Cyclic nucleotide-gated channel alpha-4 (575 aa).

The Cytoplasmic portion of the chain corresponds to 1 to 38; sequence MSQDGKVKTTESTPPAPTKARKWLPVLDPSGDYYYWWL. Residues 39–60 traverse the membrane as a helical segment; that stretch reads NTMVFPIMYNLIIVVCRACFPD. The Extracellular portion of the chain corresponds to 61-70; the sequence is LQHSYLVAWF. A helical membrane pass occupies residues 71-91; the sequence is VLDYTSDLLYLLDIGVRFHTG. At 92-116 the chain is on the cytoplasmic side; it reads FLEQGILVVDKGMIASRYVRTWSFL. Residues 117 to 135 form a helical membrane-spanning segment; the sequence is LDLASLVPTDAAYVQLGPH. Residues 136–140 lie on the Extracellular side of the membrane; that stretch reads IPTLR. A helical transmembrane segment spans residues 141–159; it reads LNRFLRVPRLFEAFDRTET. Residues 160 to 166 lie on the Cytoplasmic side of the membrane; that stretch reads RTAYPNA. An ion conduction pathway region spans residues 164–272; that stretch reads PNAFRIAKLM…GSMSSVIYNM (109 aa). A helical transmembrane segment spans residues 167-190; that stretch reads FRIAKLMLYIFVVIHWNSCLYFAL. At 191–213 the chain is on the extracellular side; the sequence is SRYLGFGRDAWVYPDPAQPGFER. The next 2 helical transmembrane spans lie at 214-248 and 249-273; these read LRRQYLYSFYFSTLILTTVGDTPLPDREEEYLFMV and GDFLLAVMGFATIMGSMSSVIYNMN. The segment at 231–234 is selectivity filter; it reads TVGD. The segment at 274 to 350 is C-linker; sequence TADAAFYPDH…STLSRVQIFQ (77 aa). The Cytoplasmic segment spans residues 274–575; the sequence is TADAAFYPDH…AGQAGPSGIE (302 aa). Residues 292–302 carry the IQ-type motif; the sequence is LQHVNKRLERR. A nucleoside 3',5'-cyclic phosphate is bound at residue 348–471; sequence IFQNCEASLL…AVMEEKGREI (124 aa). Residues 354–474 form a cyclic nucleotide-binding domain region; sequence ASLLEELVLK…EEKGREILLK (121 aa). Gly-414, Ser-417, Arg-430, and Thr-431 together coordinate 3',5'-cyclic GMP. Residues Arg-430 and Thr-431 each contribute to the 3',5'-cyclic AMP site. Residues 493-547 are a coiled coil; it reads TESRLKGLDQQLDDLQTKFARLLAELESSALKIAYRIERLEWQTREWPMPEDMGE. The disordered stretch occupies residues 537–575; it reads REWPMPEDMGEADDEAEPGEGTSKDGEGKAGQAGPSGIE. Over residues 544–554 the composition is skewed to acidic residues; the sequence is DMGEADDEAEP.

The protein belongs to the cyclic nucleotide-gated cation channel (TC 1.A.1.5) family. CNGA4 subfamily. As to quaternary structure, the olfactory cyclic nucleotide-gated channel is an heterotetramer composed of CNGA2, CNGA4 and CNGB1b subunits with 2:1:1 stoichiometry. May form homomeric channels gated by nitric oxide. In terms of processing, N-glycosylated. As to expression, olfactory neurons. Expressed in olfactory sensory cilia (at protein level).

Its subcellular location is the cell projection. The protein localises to the cilium membrane. The enzyme catalyses Ca(2+)(in) = Ca(2+)(out). The catalysed reaction is Na(+)(in) = Na(+)(out). It carries out the reaction K(+)(in) = K(+)(out). It catalyses the reaction NH4(+)(in) = NH4(+)(out). The enzyme catalyses Rb(+)(in) = Rb(+)(out). The catalysed reaction is Li(+)(in) = Li(+)(out). It carries out the reaction Cs(+)(in) = Cs(+)(out). Its activity is regulated as follows. Ca(2+)-calmodulin exerts its inhibitory effect in cAMP sensitivity by binding to IQ-like motif of CNGA4 and preferably binds to the channel in the closed state. Inhibition by PIP3 of the CNG channel probably occurs via CGNA2 binding. Ca(2+) currents are inhibited by pimozide, an L-type Ca(2+) channel blocker. Functionally, pore-forming subunit of the olfactory cyclic nucleotide-gated channel. Operates in the cilia of olfactory sensory neurons where chemical stimulation of the odorant is converted to an electrical signal. Mediates odorant-induced cAMP-dependent Ca(2+) influx triggering neuron depolarization. The rise of intracellular Ca(2+) levels potentiates the olfactory response by activating Ca(2+)-dependent Cl(-) channels, but it also serves as a negative feedback signal to desensitize the channel for rapid adaptation to odorants. Conducts cAMP- and cGMP-gated ion currents, with permeability for monovalent and divalent cations. May conduct nitric oxide-gated Ca(2+) currents relevant to neurons of vomeronasal organ, a system involved in the perception of pheromones. This is Cyclic nucleotide-gated channel alpha-4 from Rattus norvegicus (Rat).